Here is a 458-residue protein sequence, read N- to C-terminus: ATP synthase subunit beta (458 aa).

ATP is bound at residue 148–155; the sequence is GGAGVGKT.

This sequence belongs to the ATPase alpha/beta chains family. F-type ATPases have 2 components, CF(1) - the catalytic core - and CF(0) - the membrane proton channel. CF(1) has five subunits: alpha(3), beta(3), gamma(1), delta(1), epsilon(1). CF(0) has three main subunits: a(1), b(2) and c(9-12). The alpha and beta chains form an alternating ring which encloses part of the gamma chain. CF(1) is attached to CF(0) by a central stalk formed by the gamma and epsilon chains, while a peripheral stalk is formed by the delta and b chains.

It is found in the cell inner membrane. It carries out the reaction ATP + H2O + 4 H(+)(in) = ADP + phosphate + 5 H(+)(out). Its function is as follows. Produces ATP from ADP in the presence of a proton gradient across the membrane. The catalytic sites are hosted primarily by the beta subunits. The protein is ATP synthase subunit beta of Francisella tularensis subsp. mediasiatica (strain FSC147).